A 446-amino-acid chain; its full sequence is tRNA-2-methylthio-N(6)-dimethylallyladenosine synthase (446 aa).

The 118-residue stretch at 3-120 (KKLFIETHGC…LPEMIDAARS (118 aa)) folds into the MTTase N-terminal domain. [4Fe-4S] cluster is bound by residues cysteine 12, cysteine 49, cysteine 83, cysteine 157, cysteine 161, and cysteine 164. The 233-residue stretch at 143 to 375 (RVDGPTAFVS…QGRIHQQGYE (233 aa)) folds into the Radical SAM core domain. The region spanning 378-442 (RRMVGSTQRI…PHSLRGTLIE (65 aa)) is the TRAM domain.

The protein belongs to the methylthiotransferase family. MiaB subfamily. As to quaternary structure, monomer. The cofactor is [4Fe-4S] cluster.

It is found in the cytoplasm. It carries out the reaction N(6)-dimethylallyladenosine(37) in tRNA + (sulfur carrier)-SH + AH2 + 2 S-adenosyl-L-methionine = 2-methylsulfanyl-N(6)-dimethylallyladenosine(37) in tRNA + (sulfur carrier)-H + 5'-deoxyadenosine + L-methionine + A + S-adenosyl-L-homocysteine + 2 H(+). Catalyzes the methylthiolation of N6-(dimethylallyl)adenosine (i(6)A), leading to the formation of 2-methylthio-N6-(dimethylallyl)adenosine (ms(2)i(6)A) at position 37 in tRNAs that read codons beginning with uridine. This Pseudomonas paraeruginosa (strain DSM 24068 / PA7) (Pseudomonas aeruginosa (strain PA7)) protein is tRNA-2-methylthio-N(6)-dimethylallyladenosine synthase.